Reading from the N-terminus, the 201-residue chain is Recombination protein RecR (201 aa).

The C4-type zinc finger occupies 57 to 72 (CKLCQIYTEQPLCNIC). The 96-residue stretch at 80-175 (TLLCVVESPA…KCSRIAHGVP (96 aa)) folds into the Toprim domain.

It belongs to the RecR family.

In terms of biological role, may play a role in DNA repair. It seems to be involved in an RecBC-independent recombinational process of DNA repair. It may act with RecF and RecO. The polypeptide is Recombination protein RecR (Coxiella burnetii (strain RSA 493 / Nine Mile phase I)).